We begin with the raw amino-acid sequence, 121 residues long: Colipase-like protein 1 (121 aa).

The first 23 residues, 1 to 23 (MMLPQWLLLLFLLFFFLFLLTRG), serve as a signal peptide directing secretion. 5 disulfides stabilise this stretch: Cys-39-Cys-50, Cys-45-Cys-61, Cys-49-Cys-83, Cys-71-Cys-91, and Cys-85-Cys-107.

It belongs to the colipase family. In terms of tissue distribution, exclusively expressed in epididymis, in the corpus region.

It is found in the secreted. This chain is Colipase-like protein 1 (CLPSL1), found in Homo sapiens (Human).